A 466-amino-acid polypeptide reads, in one-letter code: MALALIHPSKRAYSLAPLNLKEELQGFKVQGDRKGVGQEPLCKQFRQLRYEESTGPREVLRRLRELCRQWLRPETHSKEQILELLVLEQFLTILPRDLQVQVLEHHPETGEELVGILEDLQLDRGKAGEQKDSAQRSRPTVLVGEPAPRREAREQPGCALPQKPEERGKETRSENGNLIAGTDSCGRMESSCTMTEPIEAQCEDLSLKKNPAMPKEKTNSQCLETKERLVQNSGLIEHDRAHTGEMSWESVGSQSSVAADHQEISKDKGHPCQECGKVFQRSSHLIRHQKIHLGEKPYQCKECGKVFSQNAGLLEHLRIHTGEKPYLCIHCGKNFRRSSHLNRHQKIHSQDEPRECKECGKTFSRALLLTHHQRVHGRSKRHHCNECGKAFSLTSDLIRHHRIHTGEKPFKCNVCQKAFRLNSHLDQHVRIHNEEKPYKCSECNEAFRQKSGLFQHQRHHHKSKLA.

Lys21 participates in a covalent cross-link: Glycyl lysine isopeptide (Lys-Gly) (interchain with G-Cter in SUMO2). The region spanning 42–124 (CKQFRQLRYE…GILEDLQLDR (83 aa)) is the SCAN box domain. Basic and acidic residues-rich tracts occupy residues 124–135 (RGKAGEQKDSAQ) and 163–173 (KPEERGKETRS). Residues 124–182 (RGKAGEQKDSAQRSRPTVLVGEPAPRREAREQPGCALPQKPEERGKETRSENGNLIAGT) form a disordered region. The C2H2-type 1; degenerate zinc-finger motif lies at 220-242 (SQCLETKERLVQNSGLIEHDRAH). C2H2-type zinc fingers lie at residues 270–292 (HPCQ…QKIH), 298–320 (YQCK…LRIH), 326–348 (YLCI…QKIH), 354–376 (RECK…QRVH), 382–404 (HHCN…HRIH), 410–432 (FKCN…VRIH), and 438–460 (YKCS…QRHH).

The protein resides in the nucleus. Functionally, may be involved in transcriptional regulation. This chain is Zinc finger and SCAN domain-containing protein 26 (Zscan26), found in Mus musculus (Mouse).